A 352-amino-acid chain; its full sequence is Photosystem II D2 protein (352 aa).

The residue at position 2 (threonine 2) is an N-acetylthreonine. Threonine 2 is modified (phosphothreonine). The chain crosses the membrane as a helical span at residues 40 to 60 (TAYLALGGWLTGTTFVTSWYT). Histidine 117 contacts chlorophyll a. Residues 124–140 (GFMLRQFEIARSVKLRP) traverse the membrane as a helical segment. 2 residues coordinate pheophytin a: glutamine 129 and asparagine 142. A helical membrane pass occupies residues 152–165 (VFVSVFLIYPLGQS). A chlorophyll a-binding site is contributed by histidine 197. A helical membrane pass occupies residues 207-227 (AALLCAIHGATVENTLFEDGD). Residues histidine 214 and phenylalanine 261 each coordinate a plastoquinone. Histidine 214 serves as a coordination point for Fe cation. Histidine 268 is a binding site for Fe cation. The helical transmembrane segment at 278–294 (GLWMSALGVVGLALNLR) threads the bilayer.

Belongs to the reaction center PufL/M/PsbA/D family. PSII is composed of 1 copy each of membrane proteins PsbA, PsbB, PsbC, PsbD, PsbE, PsbF, PsbH, PsbI, PsbJ, PsbK, PsbL, PsbM, PsbT, PsbX, PsbY, PsbZ, Psb30/Ycf12, at least 3 peripheral proteins of the oxygen-evolving complex and a large number of cofactors. It forms dimeric complexes. It depends on The D1/D2 heterodimer binds P680, chlorophylls that are the primary electron donor of PSII, and subsequent electron acceptors. It shares a non-heme iron and each subunit binds pheophytin, quinone, additional chlorophylls, carotenoids and lipids. There is also a Cl(-1) ion associated with D1 and D2, which is required for oxygen evolution. The PSII complex binds additional chlorophylls, carotenoids and specific lipids. as a cofactor.

It localises to the plastid. It is found in the chloroplast thylakoid membrane. It carries out the reaction 2 a plastoquinone + 4 hnu + 2 H2O = 2 a plastoquinol + O2. Its function is as follows. Photosystem II (PSII) is a light-driven water:plastoquinone oxidoreductase that uses light energy to abstract electrons from H(2)O, generating O(2) and a proton gradient subsequently used for ATP formation. It consists of a core antenna complex that captures photons, and an electron transfer chain that converts photonic excitation into a charge separation. The D1/D2 (PsbA/PsbD) reaction center heterodimer binds P680, the primary electron donor of PSII as well as several subsequent electron acceptors. D2 is needed for assembly of a stable PSII complex. The protein is Photosystem II D2 protein of Pleurastrum terricola (Filamentous green alga).